The primary structure comprises 169 residues: Crossover junction endodeoxyribonuclease RuvC (169 aa).

Catalysis depends on residues aspartate 11, glutamate 71, and aspartate 143. Mg(2+)-binding residues include aspartate 11, glutamate 71, and aspartate 143.

This sequence belongs to the RuvC family. Homodimer which binds Holliday junction (HJ) DNA. The HJ becomes 2-fold symmetrical on binding to RuvC with unstacked arms; it has a different conformation from HJ DNA in complex with RuvA. In the full resolvosome a probable DNA-RuvA(4)-RuvB(12)-RuvC(2) complex forms which resolves the HJ. Mg(2+) is required as a cofactor.

It is found in the cytoplasm. It carries out the reaction Endonucleolytic cleavage at a junction such as a reciprocal single-stranded crossover between two homologous DNA duplexes (Holliday junction).. Functionally, the RuvA-RuvB-RuvC complex processes Holliday junction (HJ) DNA during genetic recombination and DNA repair. Endonuclease that resolves HJ intermediates. Cleaves cruciform DNA by making single-stranded nicks across the HJ at symmetrical positions within the homologous arms, yielding a 5'-phosphate and a 3'-hydroxyl group; requires a central core of homology in the junction. The consensus cleavage sequence is 5'-(A/T)TT(C/G)-3'. Cleavage occurs on the 3'-side of the TT dinucleotide at the point of strand exchange. HJ branch migration catalyzed by RuvA-RuvB allows RuvC to scan DNA until it finds its consensus sequence, where it cleaves and resolves the cruciform DNA. This is Crossover junction endodeoxyribonuclease RuvC from Bartonella quintana (strain Toulouse) (Rochalimaea quintana).